The sequence spans 453 residues: MKLRVSQSPTPQMVITMLHGSSTYSLLASKKRNSNVVGQYIKNGIPFRMRNPADPSQPQVILPFKYLSEMKNAAESSWSFMHFSNQSFLLEYINAPLGSSIAHQVVRGELNKNLDWTALQPYMLFANTIARTTSLVLAGPELSANPEWTTIMVTFTMTLMQTSQEVRAKYSPWLRWLVPWIHPGAKNLYKIRKRCAQLLAPSYQNRRAGMVGDEKPFMDAIQWLMNKRTYKSKDLMKLSDDQLFLSVASIHSTSASTLSTLYDLLDRPECMDGILHEIRTIRAESKSSDWTKHDLDRLVKLDSFMKESQRYHPVGQVTVQRSNPRAYEFSDGLKIPANTQTCFLSYELNHDPDVYPDPETFDADRFLRMREKVDPQKYHFAYVSEDSINFGAGAHSCPGRHFAANEIKLMLCELLLGYEMKWPDGQSRPPTMFHDFSSNPNPGFDICIRERRL.

Residues 13–29 (MVITMLHGSSTYSLLAS) form a helical membrane-spanning segment. N-linked (GlcNAc...) asparagine glycosylation is present at Asn-85. Position 397 (Cys-397) interacts with heme.

Belongs to the cytochrome P450 family. The cofactor is heme.

The protein resides in the membrane. It participates in secondary metabolite biosynthesis. Functionally, cytochrome P450 monooxygenase; part of the gene cluster that mediates the biosynthesis of a tyrosine-derived cytochalasan acting as a fungal signal recognized by resistant rice plants and leads to avirulence in Pi33 resistant rice cultivars. The first step in the pathway is catalyzed by the hybrid PKS-NRPS ACE1, assisted by the enoyl reductase RAP1, that are responsible for fusion of the tyrosine precursor and the polyketide backbone. The polyketide synthase module (PKS) of ACE1 is responsible for the synthesis of the polyketide backbone and the downstream nonribosomal peptide synthetase (NRPS) amidates the carboxyl end of the polyketide with the tyrosine precursor. Because ACE1 lacks a designated enoylreductase (ER) domain, the required activity is provided the enoyl reductase RAP1. Reduction by the hydrolyase ORFZ, followed by dehydration and intra-molecular Diels-Alder cyclization by the Diels-Alderase ORF3 then yield the required isoindolone-fused macrocycle. A number of oxidative steps catalyzed by the tailoring enzymes identified within the cluster, including cytochrome P450 monooxygenases CYP1 to CYP4, the FAD-linked oxidoreductase OXR2 and the short-chain dehydrogenase/reductase OXR1, are further required to afford the final cytochalasans that confer avirulence and which have still to be identified. The monooxygenase CYP1 has been shown to be a site-selective C-18 hydroxylase whereas the function of CYP3 is the site-selective epoxidation of the C-6/C-7 olefin that is present in some intermediate compounds. Finally, SYN2 and RAP2 are not required for avirulence in Pi33 resistant rice cultivars. The polypeptide is Cytochrome P450 monooxygenase CYP2 (Pyricularia oryzae (strain 70-15 / ATCC MYA-4617 / FGSC 8958) (Rice blast fungus)).